The primary structure comprises 255 residues: Hydroxyacylglutathione hydrolase (255 aa).

Zn(2+) contacts are provided by His-56, His-58, Asp-60, His-61, His-114, Asp-133, and His-171.

It belongs to the metallo-beta-lactamase superfamily. Glyoxalase II family. As to quaternary structure, monomer. Zn(2+) is required as a cofactor.

It carries out the reaction an S-(2-hydroxyacyl)glutathione + H2O = a 2-hydroxy carboxylate + glutathione + H(+). The protein operates within secondary metabolite metabolism; methylglyoxal degradation; (R)-lactate from methylglyoxal: step 2/2. In terms of biological role, thiolesterase that catalyzes the hydrolysis of S-D-lactoyl-glutathione to form glutathione and D-lactic acid. The protein is Hydroxyacylglutathione hydrolase of Bradyrhizobium diazoefficiens (strain JCM 10833 / BCRC 13528 / IAM 13628 / NBRC 14792 / USDA 110).